The sequence spans 938 residues: Isoleucine--tRNA ligase (938 aa).

Residues Pro-58–His-68 carry the 'HIGH' region motif. Residue Lys-183 is modified to N6-acetyllysine. Glu-561 contributes to the L-isoleucyl-5'-AMP binding site. A 'KMSKS' region motif is present at residues Lys-602–Ser-606. An ATP-binding site is contributed by Lys-605. Residues Cys-901, Cys-904, Cys-921, and Cys-924 each coordinate Zn(2+).

The protein belongs to the class-I aminoacyl-tRNA synthetase family. IleS type 1 subfamily. Monomer. It depends on Zn(2+) as a cofactor.

It is found in the cytoplasm. The enzyme catalyses tRNA(Ile) + L-isoleucine + ATP = L-isoleucyl-tRNA(Ile) + AMP + diphosphate. Its function is as follows. Catalyzes the attachment of isoleucine to tRNA(Ile). As IleRS can inadvertently accommodate and process structurally similar amino acids such as valine, to avoid such errors it has two additional distinct tRNA(Ile)-dependent editing activities. One activity is designated as 'pretransfer' editing and involves the hydrolysis of activated Val-AMP. The other activity is designated 'posttransfer' editing and involves deacylation of mischarged Val-tRNA(Ile). This chain is Isoleucine--tRNA ligase, found in Escherichia coli O7:K1 (strain IAI39 / ExPEC).